A 160-amino-acid polypeptide reads, in one-letter code: Large ribosomal subunit protein uL22c (160 aa).

It belongs to the universal ribosomal protein uL22 family. Part of the 50S ribosomal subunit.

It is found in the plastid. The protein resides in the chloroplast. Functionally, this protein binds specifically to 23S rRNA. Its function is as follows. The globular domain of the protein is located near the polypeptide exit tunnel on the outside of the subunit, while an extended beta-hairpin is found that lines the wall of the exit tunnel in the center of the 70S ribosome. This Aethionema grandiflorum (Persian stone-cress) protein is Large ribosomal subunit protein uL22c (rpl22).